The primary structure comprises 78 residues: U23-theraphotoxin-Cg1a 1 (78 aa).

Residues 1–21 form the signal peptide; sequence MKTSVLVTVLGLAVISVLCSA. A propeptide spanning residues 22–49 is cleaved from the precursor; it reads SQDEEQDMYDELLSAVFEVNDELQSEAR. 3 disulfides stabilise this stretch: Cys-50/Cys-64, Cys-57/Cys-69, and Cys-63/Cys-75.

It belongs to the neurotoxin 10 (Hwtx-1) family. 64 (Jztx-20) subfamily. As to expression, expressed by the venom gland.

It is found in the secreted. Its function is as follows. Probable ion channel inhibitor. This Chilobrachys guangxiensis (Chinese earth tiger tarantula) protein is U23-theraphotoxin-Cg1a 1.